Consider the following 350-residue polypeptide: Protein FAM118B (350 aa).

A2 is subject to N-acetylalanine. Residue S9 is modified to Phosphoserine.

It belongs to the FAM118 family.

The protein localises to the nucleus. The protein resides in the cajal body. In terms of biological role, may play a role in Cajal bodies formation. This is Protein FAM118B (FAM118B) from Macaca fascicularis (Crab-eating macaque).